A 484-amino-acid chain; its full sequence is tRNA-2-methylthio-N(6)-dimethylallyladenosine synthase (484 aa).

Residues 36–153 form the MTTase N-terminal domain; the sequence is GKLYIKTHGC…LPELIRARRE (118 aa). Residues cysteine 45, cysteine 82, cysteine 116, cysteine 190, cysteine 194, and cysteine 197 each contribute to the [4Fe-4S] cluster site. Positions 176–415 constitute a Radical SAM core domain; it reads RAEGPSAFVS…HINAHAASIS (240 aa). Residues 416-479 form the TRAM domain; sequence QSMVGSVQRV…SNSLRGRIQL (64 aa). Residues 428–450 are disordered; it reads EGPSRRDPNELTGKSENMRPVNF.

Belongs to the methylthiotransferase family. MiaB subfamily. As to quaternary structure, monomer. [4Fe-4S] cluster serves as cofactor.

It localises to the cytoplasm. The enzyme catalyses N(6)-dimethylallyladenosine(37) in tRNA + (sulfur carrier)-SH + AH2 + 2 S-adenosyl-L-methionine = 2-methylsulfanyl-N(6)-dimethylallyladenosine(37) in tRNA + (sulfur carrier)-H + 5'-deoxyadenosine + L-methionine + A + S-adenosyl-L-homocysteine + 2 H(+). Catalyzes the methylthiolation of N6-(dimethylallyl)adenosine (i(6)A), leading to the formation of 2-methylthio-N6-(dimethylallyl)adenosine (ms(2)i(6)A) at position 37 in tRNAs that read codons beginning with uridine. This is tRNA-2-methylthio-N(6)-dimethylallyladenosine synthase from Xanthomonas axonopodis pv. citri (strain 306).